A 228-amino-acid polypeptide reads, in one-letter code: L-ribulose-5-phosphate 4-epimerase UlaF (228 aa).

Substrate is bound by residues 26-27 (GN), 43-44 (SG), and 72-73 (SS). Positions 74, 93, and 95 each coordinate Zn(2+). Aspartate 118 serves as the catalytic Proton donor/acceptor. Histidine 167 contributes to the Zn(2+) binding site. The active-site Proton donor/acceptor is the tyrosine 225.

Belongs to the aldolase class II family. AraD/FucA subfamily. Zn(2+) is required as a cofactor.

The catalysed reaction is L-ribulose 5-phosphate = D-xylulose 5-phosphate. It functions in the pathway cofactor degradation; L-ascorbate degradation; D-xylulose 5-phosphate from L-ascorbate: step 4/4. In terms of biological role, catalyzes the isomerization of L-ribulose 5-phosphate to D-xylulose 5-phosphate. Is involved in the anaerobic L-ascorbate utilization. In Shigella sonnei (strain Ss046), this protein is L-ribulose-5-phosphate 4-epimerase UlaF.